A 244-amino-acid chain; its full sequence is Anti-H(O) lectin 1 (244 aa).

Residues asparagine 113 and asparagine 117 are each glycosylated (N-linked (GlcNAc...) asparagine). The Mn(2+) site is built by glutamate 127 and aspartate 129. Ca(2+) contacts are provided by aspartate 129, tyrosine 131, asparagine 137, and aspartate 142. The Mn(2+) site is built by aspartate 142 and histidine 145.

It belongs to the leguminous lectin family. In terms of assembly, homotetramer.

In terms of biological role, di-N-acetylchitobiose-binding anti-H(O) lectin. This is Anti-H(O) lectin 1 from Cytisophyllum sessilifolium (Sessile-leaved cytisus).